Reading from the N-terminus, the 631-residue chain is ATP-dependent zinc metalloprotease FtsH (631 aa).

The Cytoplasmic portion of the chain corresponds to Met1–Asn5. The chain crosses the membrane as a helical span at residues Pro6–Ala26. Residues Arg27 to Gly102 lie on the Periplasmic side of the membrane. Residues Trp103–Trp123 traverse the membrane as a helical segment. Residues Met124–Ser631 are Cytoplasmic-facing. Gly196–Thr203 serves as a coordination point for ATP. A Zn(2+)-binding site is contributed by His418. Glu419 is an active-site residue. His422 and Asp494 together coordinate Zn(2+).

It in the central section; belongs to the AAA ATPase family. This sequence in the C-terminal section; belongs to the peptidase M41 family. Homohexamer. Zn(2+) is required as a cofactor.

It localises to the cell inner membrane. Acts as a processive, ATP-dependent zinc metallopeptidase for both cytoplasmic and membrane proteins. Plays a role in the quality control of integral membrane proteins. The chain is ATP-dependent zinc metalloprotease FtsH from Endomicrobium trichonymphae.